The following is a 1577-amino-acid chain: Pentafunctional AROM polypeptide (1577 aa).

A 3-dehydroquinate synthase region spans residues 1 to 392 (MASVGLEKVN…YGTSAHVVSD (392 aa)). NAD(+)-binding positions include 80–83 (ETYK), 111–113 (GGV), and Asp-116. Arg-127 lines the 7-phospho-2-dehydro-3-deoxy-D-arabino-heptonate pocket. 136–137 (TS) contributes to the NAD(+) binding site. The 7-phospho-2-dehydro-3-deoxy-D-arabino-heptonate site is built by Asp-143 and Lys-149. Residue Lys-158 coordinates NAD(+). Residue Asn-159 participates in 7-phospho-2-dehydro-3-deoxy-D-arabino-heptonate binding. Residues 176–179 (WLET) and Asn-187 each bind NAD(+). Glu-191 contributes to the Zn(2+) binding site. Residues 191–194 (EVIK) and Lys-258 each bind 7-phospho-2-dehydro-3-deoxy-D-arabino-heptonate. The active-site Proton acceptor; for 3-dehydroquinate synthase activity is the Glu-268. 7-phospho-2-dehydro-3-deoxy-D-arabino-heptonate-binding positions include 272–276 (RNLLN) and His-279. Residue His-279 coordinates Zn(2+). His-283 (proton acceptor; for 3-dehydroquinate synthase activity) is an active-site residue. 7-phospho-2-dehydro-3-deoxy-D-arabino-heptonate-binding residues include His-295 and Lys-364. Residue His-295 participates in Zn(2+) binding. Residues 405-863 (VYPFTDVRSS…WDVLHSRLGA (459 aa)) are EPSP synthase. Cys-845 functions as the For EPSP synthase activity in the catalytic mechanism. Residues 882–1071 (VVLIGMRAAG…VPVKRSTFVC (190 aa)) are shikimate kinase. Residue 886–893 (GMRAAGKS) participates in ATP binding. The tract at residues 1072-1284 (LTFQNLLPEM…AAPGQLTLRQ (213 aa)) is 3-dehydroquinase. The active-site Proton acceptor; for 3-dehydroquinate dehydratase activity is His-1189. Lys-1218 acts as the Schiff-base intermediate with substrate; for 3-dehydroquinate dehydratase activity in catalysis. Positions 1297-1577 (PKKMFVVGSP…APVYDAVTQE (281 aa)) are shikimate dehydrogenase.

The protein in the N-terminal section; belongs to the sugar phosphate cyclases superfamily. Dehydroquinate synthase family. This sequence in the 2nd section; belongs to the EPSP synthase family. It in the 3rd section; belongs to the shikimate kinase family. In the 4th section; belongs to the type-I 3-dehydroquinase family. The protein in the C-terminal section; belongs to the shikimate dehydrogenase family. Homodimer. Zn(2+) serves as cofactor.

The protein resides in the cytoplasm. The enzyme catalyses 7-phospho-2-dehydro-3-deoxy-D-arabino-heptonate = 3-dehydroquinate + phosphate. It catalyses the reaction 3-dehydroquinate = 3-dehydroshikimate + H2O. The catalysed reaction is shikimate + NADP(+) = 3-dehydroshikimate + NADPH + H(+). It carries out the reaction shikimate + ATP = 3-phosphoshikimate + ADP + H(+). The enzyme catalyses 3-phosphoshikimate + phosphoenolpyruvate = 5-O-(1-carboxyvinyl)-3-phosphoshikimate + phosphate. Its pathway is metabolic intermediate biosynthesis; chorismate biosynthesis; chorismate from D-erythrose 4-phosphate and phosphoenolpyruvate: step 2/7. It functions in the pathway metabolic intermediate biosynthesis; chorismate biosynthesis; chorismate from D-erythrose 4-phosphate and phosphoenolpyruvate: step 3/7. The protein operates within metabolic intermediate biosynthesis; chorismate biosynthesis; chorismate from D-erythrose 4-phosphate and phosphoenolpyruvate: step 4/7. It participates in metabolic intermediate biosynthesis; chorismate biosynthesis; chorismate from D-erythrose 4-phosphate and phosphoenolpyruvate: step 5/7. Its pathway is metabolic intermediate biosynthesis; chorismate biosynthesis; chorismate from D-erythrose 4-phosphate and phosphoenolpyruvate: step 6/7. The AROM polypeptide catalyzes 5 consecutive enzymatic reactions in prechorismate polyaromatic amino acid biosynthesis. This Eremothecium gossypii (strain ATCC 10895 / CBS 109.51 / FGSC 9923 / NRRL Y-1056) (Yeast) protein is Pentafunctional AROM polypeptide.